We begin with the raw amino-acid sequence, 320 residues long: Adenosine receptor A3 (320 aa).

Residues 1–16 (MKANNTTTSALWLQIT) lie on the Extracellular side of the membrane. N-linked (GlcNAc...) asparagine glycosylation is found at asparagine 4 and asparagine 5. A helical membrane pass occupies residues 17–39 (YITMEAAIGLCAVVGNMLVIWVV). Topologically, residues 40–50 (KLNRTLRTTTF) are cytoplasmic. The chain crosses the membrane as a helical span at residues 51–74 (YFIVSLALADIAVGVLVIPLAIAV). Over 75–86 (SLEVQMHFYACL) the chain is Extracellular. Cysteine 85 and cysteine 168 form a disulfide bridge. A helical transmembrane segment spans residues 87–108 (FMSCVLLVFTHASIMSLLAIAV). The Cytoplasmic segment spans residues 109–128 (DRYLRVKLTVRYRTVTTQRR). Residues 129-150 (IWLFLGLCWLVSFLVGLTPMFG) traverse the membrane as a helical segment. Residues 151–179 (WNRKVTLELSQNSSTLSCHFRSVVGLDYM) lie on the Extracellular side of the membrane. A helical membrane pass occupies residues 180-200 (VFFSFITWILIPLVVMCIIYL). The Cytoplasmic portion of the chain corresponds to 201–233 (DIFYIIRNKLSQNLTGFRETRAFYGREFKTAKS). Residues 234 to 257 (LFLVLFLFALCWLPLSIINFVSYF) form a helical membrane-spanning segment. The Extracellular segment spans residues 258–263 (NVKIPE). A helical membrane pass occupies residues 264–286 (IAMCLGILLSHANSMMNPIVYAC). The Cytoplasmic segment spans residues 287–320 (KIKKFKETYFVILRACRLCQTSDSLDSNLEQTTE). Cysteine 305 is lipidated: S-palmitoyl cysteine. Phosphothreonine occurs at positions 307, 318, and 319.

This sequence belongs to the G-protein coupled receptor 1 family. Post-translationally, phosphorylation on Thr-318 and Thr-319 may be crucial for rapid desensitization. Phosphorylation on Thr-318 may be necessary for phosphorylation on Thr-319 to occur. As to expression, testis, particularly in spermatocytes and spermatids but not in spermatogonia. Low levels in the brain.

The protein localises to the cell membrane. Functionally, receptor for adenosine. The activity of this receptor is mediated by G proteins which inhibits adenylyl cyclase. May play a role during reproduction. The polypeptide is Adenosine receptor A3 (Adora3) (Rattus norvegicus (Rat)).